Here is a 348-residue protein sequence, read N- to C-terminus: RNA 3'-terminal phosphate cyclase (348 aa).

ATP-binding positions include Gln-107 and 290-294 (HLADQ). Residue His-316 is the Tele-AMP-histidine intermediate of the active site.

Belongs to the RNA 3'-terminal cyclase family. Type 1 subfamily.

It is found in the cytoplasm. The enzyme catalyses a 3'-end 3'-phospho-ribonucleotide-RNA + ATP = a 3'-end 2',3'-cyclophospho-ribonucleotide-RNA + AMP + diphosphate. In terms of biological role, catalyzes the conversion of 3'-phosphate to a 2',3'-cyclic phosphodiester at the end of RNA. The mechanism of action of the enzyme occurs in 3 steps: (A) adenylation of the enzyme by ATP; (B) transfer of adenylate to an RNA-N3'P to produce RNA-N3'PP5'A; (C) and attack of the adjacent 2'-hydroxyl on the 3'-phosphorus in the diester linkage to produce the cyclic end product. The biological role of this enzyme is unknown but it is likely to function in some aspects of cellular RNA processing. The chain is RNA 3'-terminal phosphate cyclase from Trichormus variabilis (strain ATCC 29413 / PCC 7937) (Anabaena variabilis).